The following is a 66-amino-acid chain: Cold shock-like protein CspD (66 aa).

The CSD domain maps to 4–63 (GKVKWFNGEKGFGFIEVEGGEDVFVHFSAIQGDGFKTLEEGQEVSFEIVDGNRGPQAANV).

As to quaternary structure, homodimer.

Its subcellular location is the cytoplasm. The chain is Cold shock-like protein CspD (cspD) from Bacillus cereus.